A 569-amino-acid chain; its full sequence is Estrogen receptor (569 aa).

Residues 1-151 are modulating; the sequence is MYPKEEHSAG…GFDSGKETRF (151 aa). Residues 28–37 are compositionally biased toward polar residues; that stretch reads PTQTFGTSSP. Positions 28-65 are disordered; it reads PTQTFGTSSPAEPASVGYYPAPPDPHEEHLQTLGGGSS. NR C4-type zinc fingers lie at residues 152-172 and 188-212; these read CAVC…CEGC and CPAT…LRKC. Positions 152–217 form a DNA-binding region, nuclear receptor; the sequence is CAVCSDYASG…RLRKCYEVGM (66 aa). The tract at residues 218–278 is hinge; that stretch reads MKGGIRKDRG…SGGVVSTLCM (61 aa). The tract at residues 223–271 is disordered; that stretch reads RKDRGGRSVRRERRRSSNEDRDKSSSDQCSRAGVRTTGPQDKRKKRSGG. Positions 237–247 are enriched in basic and acidic residues; it reads RSSNEDRDKSS. The region spanning 279-515 is the NR LBD domain; sequence SPDQVLLLLL…DLLLEMLDAQ (237 aa). A compositionally biased stretch (polar residues) spans 523 to 532; that stretch reads VQRVWSQSEK. The tract at residues 523-569 is disordered; the sequence is VQRVWSQSEKNPPSTPTTSSSSSNNSPRGGAAAIQSNGACHSHSPDP. A compositionally biased stretch (low complexity) spans 538-549; sequence PTTSSSSSNNSP.

It belongs to the nuclear hormone receptor family. NR3 subfamily. As to quaternary structure, binds DNA as a homodimer. Can form a heterodimer with ER-beta.

It is found in the nucleus. The steroid hormones and their receptors are involved in the regulation of eukaryotic gene expression and affect cellular proliferation and differentiation in target tissues. This chain is Estrogen receptor (esr1), found in Danio rerio (Zebrafish).